The primary structure comprises 290 residues: 33 kDa chaperonin (290 aa).

Disulfide bonds link cysteine 235/cysteine 237 and cysteine 268/cysteine 271.

The protein belongs to the HSP33 family. Post-translationally, under oxidizing conditions two disulfide bonds are formed involving the reactive cysteines. Under reducing conditions zinc is bound to the reactive cysteines and the protein is inactive.

It is found in the cytoplasm. Its function is as follows. Redox regulated molecular chaperone. Protects both thermally unfolding and oxidatively damaged proteins from irreversible aggregation. Plays an important role in the bacterial defense system toward oxidative stress. This chain is 33 kDa chaperonin, found in Streptococcus pyogenes serotype M1.